A 470-amino-acid chain; its full sequence is FK506-binding protein 4 (470 aa).

Disordered stretches follow at residues 40–101 (DEEP…KEKA), 114–163 (EEAM…GLEL), and 210–358 (PIDP…QTTG). Composition is skewed to acidic residues over residues 68 to 91 (DLED…DEEP), 115 to 131 (EAMD…EDGE), 150 to 163 (DSDE…GLEL), and 218 to 254 (EDED…ELDG). 2 stretches are compositionally biased toward basic and acidic residues: residues 268-291 (EPPK…EKPA) and 319-332 (EQKK…EAKK). The PPIase FKBP-type domain maps to 384-470 (GNTVAMRYIG…IFDVKLLEIK (87 aa)).

The protein belongs to the FKBP-type PPIase family. FKBP3/4 subfamily. In terms of assembly, binds to histones H3 and H4.

It localises to the nucleus. It catalyses the reaction [protein]-peptidylproline (omega=180) = [protein]-peptidylproline (omega=0). Inhibited by both FK506 and rapamycin. PPIase that acts as a histone chaperone. Histone proline isomerase that increases the rate of cis-trans isomerization at prolines on the histone H3 N-terminal tail. Proline isomerization influences H3 methylation thereby regulating gene expression. This is FK506-binding protein 4 (fpr4) from Aspergillus oryzae (strain ATCC 42149 / RIB 40) (Yellow koji mold).